A 334-amino-acid chain; its full sequence is L-lactate dehydrogenase C chain (334 aa).

NAD(+) contacts are provided by residues 30 to 58 (GQVG…LEDK), Arg-100, and Asn-139. Substrate contacts are provided by Asn-139 and Arg-170. The Proton acceptor role is filled by His-194. Residue Thr-249 participates in substrate binding.

This sequence belongs to the LDH/MDH superfamily. LDH family. Homotetramer.

It is found in the cytoplasm. It carries out the reaction (S)-lactate + NAD(+) = pyruvate + NADH + H(+). It participates in fermentation; pyruvate fermentation to lactate; (S)-lactate from pyruvate: step 1/1. This chain is L-lactate dehydrogenase C chain (ldhc), found in Xenopus laevis (African clawed frog).